The sequence spans 84 residues: Exodeoxyribonuclease 7 small subunit (84 aa).

Belongs to the XseB family. As to quaternary structure, heterooligomer composed of large and small subunits.

The protein resides in the cytoplasm. The enzyme catalyses Exonucleolytic cleavage in either 5'- to 3'- or 3'- to 5'-direction to yield nucleoside 5'-phosphates.. In terms of biological role, bidirectionally degrades single-stranded DNA into large acid-insoluble oligonucleotides, which are then degraded further into small acid-soluble oligonucleotides. This chain is Exodeoxyribonuclease 7 small subunit, found in Caulobacter vibrioides (strain ATCC 19089 / CIP 103742 / CB 15) (Caulobacter crescentus).